Consider the following 268-residue polypeptide: Homeobox protein Hox-C4a (268 aa).

A disordered region spans residues 70–129 (PEPDTQRGHGLPHAGHLLGKGQSASCEPPPLPLSPATPSAASSACNQATPEHPNSSASAK). Low complexity-rich tracts occupy residues 77–95 (GHGL…SASC) and 105–114 (ATPSAASSAC). Residues 115 to 128 (NQATPEHPNSSASA) are compositionally biased toward polar residues. The Antp-type hexapeptide motif lies at 133–138 (VYPWMK). The segment at residues 154 to 213 (PKRSRTAYTRQQVLELEKEFHYNRYLTRRRRIEIAHSLVLSERQIKIWFQNRRMKWKKDH) is a DNA-binding region (homeobox). Residues 212–268 (DHRLPNTKVRSSSSTGISSGSNTSSAAGVVAAASTTNTMSASEDLSGTERGEDITRL) are disordered. Over residues 222–253 (SSSSTGISSGSNTSSAAGVVAAASTTNTMSAS) the composition is skewed to low complexity. Residues 258 to 268 (GTERGEDITRL) are compositionally biased toward basic and acidic residues.

Belongs to the Antp homeobox family. Deformed subfamily.

Its subcellular location is the nucleus. Functionally, sequence-specific transcription factor which is part of a developmental regulatory system that provides cells with specific positional identities on the anterior-posterior axis. This Danio rerio (Zebrafish) protein is Homeobox protein Hox-C4a (hoxc4a).